Here is a 421-residue protein sequence, read N- to C-terminus: uncharacterized protein (421 aa).

Residues 14–72 (DLTKGDTITVEVTRPAHGGEGIAHHGGRVIFVRGGFPGDDVDVEITQVKKRFARGFVVQ) enclose the TRAM domain. S-adenosyl-L-methionine-binding residues include Gln250, Tyr286, Glu308, and Asp349. Catalysis depends on Cys376, which acts as the Nucleophile.

It belongs to the class I-like SAM-binding methyltransferase superfamily. RNA M5U methyltransferase family.

This is an uncharacterized protein from Corynebacterium efficiens (strain DSM 44549 / YS-314 / AJ 12310 / JCM 11189 / NBRC 100395).